A 169-amino-acid chain; its full sequence is Thiol peroxidase (169 aa).

A Thioredoxin domain is found at 19-167 (LKVGDRAPEA…YDEVVNKVKE (149 aa)). Cys-61 functions as the Cysteine sulfenic acid (-SOH) intermediate in the catalytic mechanism. Residues Cys-61 and Cys-95 are joined by a disulfide bond.

Belongs to the peroxiredoxin family. Tpx subfamily. Homodimer.

The enzyme catalyses a hydroperoxide + [thioredoxin]-dithiol = an alcohol + [thioredoxin]-disulfide + H2O. Thiol-specific peroxidase that catalyzes the reduction of hydrogen peroxide and organic hydroperoxides to water and alcohols, respectively. Plays a role in cell protection against oxidative stress by detoxifying peroxides. This is Thiol peroxidase from Aquifex aeolicus (strain VF5).